The primary structure comprises 308 residues: MSSWTSKENINGVYIPSALLIFGTTIIKKEWIAYATALAVVLSAWKLFSNKPRKVLNPTEFQNFVLKDKTIVSHNVCIYRFALPRPTDILGLPIGQHISLAATIPGQSKEIVRSYTPISSDDDAGYFDLLVKSYPQGNISKHLTTLRIGDKMKVRGPKGAMVYTPNMVRHIGMIAGGTGITPMLQVIKAIIKGRPRNGGNDTTQIDLIFANVNPDDILLKEELDQLAKEDDAFRIYYVLNNPPEKWNGGVGFVTPDMIKAKLPAPAGDIKVLICGPPPMVSAMKKATESLGYKKANLVSKLEDQVFCF.

Residues 10–27 traverse the membrane as a helical segment; it reads INGVYIPSALLIFGTTII. One can recognise an FAD-binding FR-type domain in the interval 59-164; the sequence is TEFQNFVLKD…RGPKGAMVYT (106 aa). Residues 144 to 159 and 170 to 207 each bind FAD; these read TTLRIGDKMKVRGPKG and HIGMIAGGTGITPMLQVIKAIIKGRPRNGGNDTTQIDL.

The protein belongs to the flavoprotein pyridine nucleotide cytochrome reductase family. As to quaternary structure, monomer. Component of the 2-(3-amino-3-carboxypropyl)histidine synthase complex composed of DPH1, DPH2, DPH3 and a NADH-dependent reductase, predominantly CBR1. FAD serves as cofactor.

Its subcellular location is the mitochondrion outer membrane. It carries out the reaction 2 Fe(III)-[cytochrome b5] + NADH = 2 Fe(II)-[cytochrome b5] + NAD(+) + H(+). The enzyme catalyses 2 Fe(3+)-[Dph3] + NADH = 2 Fe(2+)-[Dph3] + NAD(+) + H(+). Its pathway is protein modification; peptidyl-diphthamide biosynthesis. Its function is as follows. NADH-dependent reductase for DPH3 and cytochrome b5. Required for the first step of diphthamide biosynthesis, a post-translational modification of histidine which occurs in elongation factor 2. DPH1 and DPH2 transfer a 3-amino-3-carboxypropyl (ACP) group from S-adenosyl-L-methionine (SAM) to a histidine residue, the reaction is assisted by a reduction system comprising DPH3 and a NADH-dependent reductase, predominantly CBR1. By reducing DPH3, also involved in the formation of the tRNA wobble base modification mcm5s 2U (5-methoxycarbonylmethyl-2-thiouridine), mediated by the elongator complex. The cytochrome b5/NADH cytochrome b5 reductase electron transfer system supports the catalytic activity of several sterol biosynthetic enzymes. This chain is NADH-cytochrome b5 reductase 1 (CBR1), found in Coccidioides immitis (strain RS) (Valley fever fungus).